The sequence spans 190 residues: Elongation factor P-like protein (190 aa).

Belongs to the elongation factor P family.

The chain is Elongation factor P-like protein from Edwardsiella ictaluri (strain 93-146).